We begin with the raw amino-acid sequence, 601 residues long: Glutathione-regulated potassium-efflux system protein KefB (601 aa).

Transmembrane regions (helical) follow at residues 4–24, 29–49, 55–75, 87–107, 115–135, 152–172, 177–197, 207–227, 230–250, 268–288, 291–311, 326–346, and 356–376; these read SDLL…VPLA, IGAV…GLGF, EILH…GLEL, IFGV…GLLM, AAVV…LQLM, VLLF…LLAG, HVNW…LIGG, FIAS…LVLG, LFME…GVLL, GLLL…GVLY, LLWV…VLYL, FAGV…LPAS, and ALLL…MKGI. Positions 400-519 constitute an RCK N-terminal domain; sequence KPQVIIVGFG…AGVTQFSRET (120 aa).

Belongs to the monovalent cation:proton antiporter 2 (CPA2) transporter (TC 2.A.37) family. KefB subfamily. In terms of assembly, interacts with the regulatory subunit KefG.

Its subcellular location is the cell inner membrane. Pore-forming subunit of a potassium efflux system that confers protection against electrophiles. Catalyzes K(+)/H(+) antiport. The sequence is that of Glutathione-regulated potassium-efflux system protein KefB from Klebsiella pneumoniae subsp. pneumoniae (strain ATCC 700721 / MGH 78578).